A 322-amino-acid chain; its full sequence is N-acetyl-gamma-glutamyl-phosphate reductase 2 (322 aa).

Cys117 is a catalytic residue.

The protein belongs to the NAGSA dehydrogenase family. Type 2 subfamily.

The protein resides in the cytoplasm. It catalyses the reaction N-acetyl-L-glutamate 5-semialdehyde + phosphate + NADP(+) = N-acetyl-L-glutamyl 5-phosphate + NADPH + H(+). The protein operates within amino-acid biosynthesis; L-arginine biosynthesis; N(2)-acetyl-L-ornithine from L-glutamate: step 3/4. In terms of biological role, catalyzes the NADPH-dependent reduction of N-acetyl-5-glutamyl phosphate to yield N-acetyl-L-glutamate 5-semialdehyde. The sequence is that of N-acetyl-gamma-glutamyl-phosphate reductase 2 from Nostoc sp. (strain PCC 7120 / SAG 25.82 / UTEX 2576).